The chain runs to 395 residues: Elongation factor Tu (395 aa).

In terms of domain architecture, tr-type G spans 10-204 (KPHVNIGTIG…TVDSYIPEPA (195 aa)). The G1 stretch occupies residues 19–26 (GHVDHGKT). A GTP-binding site is contributed by 19–26 (GHVDHGKT). Thr26 is a binding site for Mg(2+). Residues 60–64 (GITIN) are G2. A G3 region spans residues 81 to 84 (DAPG). GTP-binding positions include 81–85 (DAPGH) and 136–139 (NKTD). The G4 stretch occupies residues 136–139 (NKTD). Residues 174-176 (SAL) form a G5 region.

This sequence belongs to the TRAFAC class translation factor GTPase superfamily. Classic translation factor GTPase family. EF-Tu/EF-1A subfamily. Monomer.

Its subcellular location is the cytoplasm. The catalysed reaction is GTP + H2O = GDP + phosphate + H(+). Its function is as follows. GTP hydrolase that promotes the GTP-dependent binding of aminoacyl-tRNA to the A-site of ribosomes during protein biosynthesis. In Leuconostoc mesenteroides subsp. mesenteroides (strain ATCC 8293 / DSM 20343 / BCRC 11652 / CCM 1803 / JCM 6124 / NCDO 523 / NBRC 100496 / NCIMB 8023 / NCTC 12954 / NRRL B-1118 / 37Y), this protein is Elongation factor Tu.